A 64-amino-acid polypeptide reads, in one-letter code: H/ACA ribonucleoprotein complex subunit 3-like protein (64 aa).

Belongs to the NOP10 family. Component of the small nucleolar ribonucleoprotein particles containing H/ACA-type snoRNAs (H/ACA snoRNPs).

Its subcellular location is the nucleus. It localises to the nucleolus. In terms of biological role, required for ribosome biogenesis. Part of a complex which catalyzes pseudouridylation of rRNA. This involves the isomerization of uridine such that the ribose is subsequently attached to C5, instead of the normal N1. Pseudouridine ('psi') residues may serve to stabilize the conformation of rRNAs. This is H/ACA ribonucleoprotein complex subunit 3-like protein from Arabidopsis thaliana (Mouse-ear cress).